The primary structure comprises 522 residues: Maturase K (522 aa).

This sequence belongs to the intron maturase 2 family. MatK subfamily.

It localises to the plastid. It is found in the chloroplast. Functionally, usually encoded in the trnK tRNA gene intron. Probably assists in splicing its own and other chloroplast group II introns. This chain is Maturase K, found in Micranthus junceus (Micranthus plantagineus var. junceus).